We begin with the raw amino-acid sequence, 262 residues long: Capsid protein (262 aa).

Residues 183–262 (APTIEAITRP…SHHRSPSPRK (80 aa)) form a disordered region. Positions 215–233 (RRRKVKTTVVYGRRRSKSR) match the Bipartite nuclear localization signal motif. Basic residues-rich tracts occupy residues 215-234 (RRRK…KSRE) and 252-262 (SSHHRSPSPRK).

Belongs to the avihepadnavirus core antigen family. As to quaternary structure, homodimerizes, then multimerizes.

The protein localises to the virion. It is found in the host cytoplasm. Functionally, self assembles to form an icosahedral capsid. Most capsid appear to be large particles with an icosahedral symmetry of T=4 and consist of 240 copies of capsid protein, though a fraction forms smaller T=3 particles consisting of 180 capsid proteins. Entering capsid are transported along microtubules to the nucleus. Phosphorylation of the capsid is thought to induce exposure of nuclear localization signal in the C-terminal portion of the capsid protein that allows binding to the nuclear pore complex via the importin (karyopherin-) alpha and beta. Capsids are imported in intact form through the nuclear pore into the nuclear basket, where it probably binds NUP153. Only capsids that contain the mature viral genome can release the viral DNA and capsid protein into the nucleoplasm. Immature capsids get stucked in the basket. Capsids encapsulate the pre-genomic RNA and the P protein. Pre-genomic RNA is reverse transcribed into DNA while the capsid is still in the cytoplasm. The capsid can then either be directed to the nucleus, providing more genome for transcription, or bud through the endoplasmic reticulum to provide new virions. This Duck hepatitis B virus (isolate Shanghai/DHBVQCA34) (DHBV) protein is Capsid protein (C).